A 659-amino-acid polypeptide reads, in one-letter code: Threonine--tRNA ligase (659 aa).

One can recognise a TGS domain in the interval 1-60 (MTVYLPDGKPLELPEGATAKDVARALGEGWERRAVGAIVDGELYDLLKPLPQGAKVRLLT). Residues 252 to 552 (DHRRLGRELE…LIEHFAGDFP (301 aa)) form a catalytic region. Zn(2+) contacts are provided by C349, H400, and H529.

The protein belongs to the class-II aminoacyl-tRNA synthetase family. Homodimer. Requires Zn(2+) as cofactor.

The protein resides in the cytoplasm. The enzyme catalyses tRNA(Thr) + L-threonine + ATP = L-threonyl-tRNA(Thr) + AMP + diphosphate + H(+). Catalyzes the attachment of threonine to tRNA(Thr) in a two-step reaction: L-threonine is first activated by ATP to form Thr-AMP and then transferred to the acceptor end of tRNA(Thr). Also edits incorrectly charged L-seryl-tRNA(Thr). This is Threonine--tRNA ligase from Thermus thermophilus (strain ATCC BAA-163 / DSM 7039 / HB27).